We begin with the raw amino-acid sequence, 415 residues long: Serine hydroxymethyltransferase (415 aa).

(6S)-5,6,7,8-tetrahydrofolate is bound by residues leucine 121 and 125-127 (GHL). An N6-(pyridoxal phosphate)lysine modification is found at lysine 229. 352–354 (SPF) serves as a coordination point for (6S)-5,6,7,8-tetrahydrofolate.

Belongs to the SHMT family. Homodimer. Pyridoxal 5'-phosphate is required as a cofactor.

The protein resides in the cytoplasm. The catalysed reaction is (6R)-5,10-methylene-5,6,7,8-tetrahydrofolate + glycine + H2O = (6S)-5,6,7,8-tetrahydrofolate + L-serine. It functions in the pathway one-carbon metabolism; tetrahydrofolate interconversion. It participates in amino-acid biosynthesis; glycine biosynthesis; glycine from L-serine: step 1/1. Catalyzes the reversible interconversion of serine and glycine with tetrahydrofolate (THF) serving as the one-carbon carrier. This reaction serves as the major source of one-carbon groups required for the biosynthesis of purines, thymidylate, methionine, and other important biomolecules. Also exhibits THF-independent aldolase activity toward beta-hydroxyamino acids, producing glycine and aldehydes, via a retro-aldol mechanism. This chain is Serine hydroxymethyltransferase, found in Methylobacillus flagellatus (strain ATCC 51484 / DSM 6875 / VKM B-1610 / KT).